The chain runs to 356 residues: Cobalt-precorrin-5B C(1)-methyltransferase (356 aa).

Belongs to the CbiD family.

It carries out the reaction Co-precorrin-5B + S-adenosyl-L-methionine = Co-precorrin-6A + S-adenosyl-L-homocysteine. Its pathway is cofactor biosynthesis; adenosylcobalamin biosynthesis; cob(II)yrinate a,c-diamide from sirohydrochlorin (anaerobic route): step 6/10. Functionally, catalyzes the methylation of C-1 in cobalt-precorrin-5B to form cobalt-precorrin-6A. This chain is Cobalt-precorrin-5B C(1)-methyltransferase, found in Citrifermentans bemidjiense (strain ATCC BAA-1014 / DSM 16622 / JCM 12645 / Bem) (Geobacter bemidjiensis).